The chain runs to 487 residues: Bifunctional protein GlmU (487 aa).

The interval 1 to 235 is pyrophosphorylase; the sequence is MSHSPTPLAA…PEEASGVNDR (235 aa). UDP-N-acetyl-alpha-D-glucosamine contacts are provided by residues 13-16, Lys-27, Gln-82, 87-88, 110-112, Gly-147, Glu-162, Asn-177, and Asn-233; these read LAAG, GT, and SGD. A Mg(2+)-binding site is contributed by Asp-112. Asn-233 provides a ligand contact to Mg(2+). The tract at residues 236 to 256 is linker; that stretch reads EELARAGRVLLRRRASELMRS. Residues 257-487 are N-acetyltransferase; it reads GVTIEDPERF…ADSPRGGRAS (231 aa). 2 residues coordinate UDP-N-acetyl-alpha-D-glucosamine: Arg-339 and Lys-357. The active-site Proton acceptor is the His-369. Residues Tyr-372 and Asn-383 each contribute to the UDP-N-acetyl-alpha-D-glucosamine site. Residues Ala-386, 392-393, Ser-411, Ala-429, and Arg-446 contribute to the acetyl-CoA site; that span reads NY. The segment at 453-487 is disordered; sequence EGWVARRKAEAQNKGAAEAAPAPSPADSPRGGRAS. Residues 468 to 481 show a composition bias toward low complexity; it reads AAEAAPAPSPADSP.

This sequence in the N-terminal section; belongs to the N-acetylglucosamine-1-phosphate uridyltransferase family. It in the C-terminal section; belongs to the transferase hexapeptide repeat family. As to quaternary structure, homotrimer. The cofactor is Mg(2+).

The protein localises to the cytoplasm. The enzyme catalyses alpha-D-glucosamine 1-phosphate + acetyl-CoA = N-acetyl-alpha-D-glucosamine 1-phosphate + CoA + H(+). It carries out the reaction N-acetyl-alpha-D-glucosamine 1-phosphate + UTP + H(+) = UDP-N-acetyl-alpha-D-glucosamine + diphosphate. It functions in the pathway nucleotide-sugar biosynthesis; UDP-N-acetyl-alpha-D-glucosamine biosynthesis; N-acetyl-alpha-D-glucosamine 1-phosphate from alpha-D-glucosamine 6-phosphate (route II): step 2/2. The protein operates within nucleotide-sugar biosynthesis; UDP-N-acetyl-alpha-D-glucosamine biosynthesis; UDP-N-acetyl-alpha-D-glucosamine from N-acetyl-alpha-D-glucosamine 1-phosphate: step 1/1. Its pathway is bacterial outer membrane biogenesis; LPS lipid A biosynthesis. In terms of biological role, catalyzes the last two sequential reactions in the de novo biosynthetic pathway for UDP-N-acetylglucosamine (UDP-GlcNAc). The C-terminal domain catalyzes the transfer of acetyl group from acetyl coenzyme A to glucosamine-1-phosphate (GlcN-1-P) to produce N-acetylglucosamine-1-phosphate (GlcNAc-1-P), which is converted into UDP-GlcNAc by the transfer of uridine 5-monophosphate (from uridine 5-triphosphate), a reaction catalyzed by the N-terminal domain. This Anaeromyxobacter sp. (strain Fw109-5) protein is Bifunctional protein GlmU.